Reading from the N-terminus, the 251-residue chain is MKGAEPLAELRLRATFLERPNRFVARVRLEDGREVPVHVASSGRMKELLVPGAPVIVTLQGDASAQPTRPFGGRKTAGRLLMVRTGSTWVSVDTSLPGKLFHQAVVAGSCAPFAGYTEVRPEYRYGGSRIDFLLTAPDLPPCLVEVKSVTSVLPDADGARVARFPDAPTARGARHLDELAGAVREGYRAAVCFITQRDDAQAFGPWDEIDPFFGETLRKVARAGVEIRAFVTHVTPEGAVLGGELPVRLAR.

Belongs to the SfsA family.

The sequence is that of Sugar fermentation stimulation protein homolog from Symbiobacterium thermophilum (strain DSM 24528 / JCM 14929 / IAM 14863 / T).